Consider the following 562-residue polypeptide: Formate--tetrahydrofolate ligase (562 aa).

ATP is bound at residue 71–78; sequence TPAGEGKS.

This sequence belongs to the formate--tetrahydrofolate ligase family.

The enzyme catalyses (6S)-5,6,7,8-tetrahydrofolate + formate + ATP = (6R)-10-formyltetrahydrofolate + ADP + phosphate. It participates in one-carbon metabolism; tetrahydrofolate interconversion. The protein is Formate--tetrahydrofolate ligase of Bacillus anthracis (strain A0248).